Here is a 518-residue protein sequence, read N- to C-terminus: 12S seed storage globulin 1 (518 aa).

The first 24 residues, 1 to 24 (MATTRFPSLLFYSCIFLLCNGSMA), serve as a signal peptide directing secretion. 2 cysteine pairs are disulfide-bonded: cysteine 45/cysteine 78 and cysteine 121/cysteine 324. Residues 50 to 240 (LQAFEPLRQV…ALGISQQAAQ (191 aa)) form the Cupin type-1 1 domain. The span at 281–295 (QSQQEQSTQYQVGQS) shows a compositional bias: low complexity. A disordered region spans residues 281 to 311 (QSQQEQSTQYQVGQSPQYQEGQSTQYQSGQS). A compositionally biased stretch (polar residues) spans 296–311 (PQYQEGQSTQYQSGQS). One can recognise a Cupin type-1 2 domain in the interval 330–479 (QNIENPKRAD…AYRISRQESQ (150 aa)). The interval 496-518 (FAQTGSQSYQDEGESSSTEKASE) is disordered.

The protein belongs to the 11S seed storage protein (globulins) family. As to quaternary structure, hexamer; each subunit is composed of an acidic and a basic chain derived from a single precursor and linked by a disulfide bond.

Its function is as follows. This is a seed storage protein. This chain is 12S seed storage globulin 1, found in Avena sativa (Oat).